We begin with the raw amino-acid sequence, 662 residues long: Aprataxin-like protein (662 aa).

The HIT domain occupies 4–108; the sequence is SSALIKDISK…ISKDFVSTSL (105 aa). The C2H2-type zinc-finger motif lies at 381 to 403; it reads LRCNQCEFVTNMLLDLKAHLYQH. The tract at residues 482-662 is disordered; it reads KNINGPSVNM…PAPPSNSKPS (181 aa). Low complexity predominate over residues 490-500; sequence NMMNQNNPNNP. Composition is skewed to polar residues over residues 501 to 513 and 560 to 569; these read FRNT…QSQK and GHQQFPNASS. A compositionally biased stretch (gly residues) spans 570–582; sequence VGGGQTGLPGQGQ. The span at 588-599 shows a compositional bias: polar residues; it reads WNSNKIFNQQNR. Positions 600-626 are enriched in low complexity; that stretch reads QNTVQAQPQAQNQQTNQQQIQNSNKNQ. A compositionally biased stretch (pro residues) spans 653-662; that stretch reads PAPPSNSKPS.

The protein localises to the nucleus. In terms of biological role, DNA-binding protein involved in single-strand DNA break repair, double-strand DNA break repair and base excision repair. Resolves abortive DNA ligation intermediates formed either at base excision sites, or when DNA ligases attempt to repair non-ligatable breaks induced by reactive oxygen species. Catalyzes the release of adenylate groups covalently linked to 5'-phosphate termini, resulting in the production of 5'-phosphate termini that can be efficiently rejoined. This is Aprataxin-like protein from Drosophila melanogaster (Fruit fly).